The sequence spans 275 residues: 2,3,4,5-tetrahydropyridine-2,6-dicarboxylate N-succinyltransferase (275 aa).

Substrate-binding residues include Arg108 and Asp145.

Belongs to the transferase hexapeptide repeat family. Homotrimer.

The protein resides in the cytoplasm. The enzyme catalyses (S)-2,3,4,5-tetrahydrodipicolinate + succinyl-CoA + H2O = (S)-2-succinylamino-6-oxoheptanedioate + CoA. Its pathway is amino-acid biosynthesis; L-lysine biosynthesis via DAP pathway; LL-2,6-diaminopimelate from (S)-tetrahydrodipicolinate (succinylase route): step 1/3. This is 2,3,4,5-tetrahydropyridine-2,6-dicarboxylate N-succinyltransferase from Jannaschia sp. (strain CCS1).